The sequence spans 417 residues: 4-hydroxy-3-methylbut-2-en-1-yl diphosphate synthase (flavodoxin) (417 aa).

4 residues coordinate [4Fe-4S] cluster: cysteine 304, cysteine 307, cysteine 350, and glutamate 357.

This sequence belongs to the IspG family. [4Fe-4S] cluster is required as a cofactor.

It catalyses the reaction (2E)-4-hydroxy-3-methylbut-2-enyl diphosphate + oxidized [flavodoxin] + H2O + 2 H(+) = 2-C-methyl-D-erythritol 2,4-cyclic diphosphate + reduced [flavodoxin]. It functions in the pathway isoprenoid biosynthesis; isopentenyl diphosphate biosynthesis via DXP pathway; isopentenyl diphosphate from 1-deoxy-D-xylulose 5-phosphate: step 5/6. Functionally, converts 2C-methyl-D-erythritol 2,4-cyclodiphosphate (ME-2,4cPP) into 1-hydroxy-2-methyl-2-(E)-butenyl 4-diphosphate. This Sinorhizobium medicae (strain WSM419) (Ensifer medicae) protein is 4-hydroxy-3-methylbut-2-en-1-yl diphosphate synthase (flavodoxin).